A 729-amino-acid polypeptide reads, in one-letter code: Pentatricopeptide repeat-containing protein At4g04370 (729 aa).

17 PPR repeats span residues 10–44 (STKYFNSHINHLSSHGDHKQVLSTFSSMLANKLLP), 45–79 (DTFTFPSLLKACASLQRLSFGLSIHQQVLVNGFSS), 80–110 (DFYISSSLVNLYAKFGLLAHARKVFEEMRER), 111–145 (DVVHWTAMIGCYSRAGIVGEACSLVNEMRFQGIKP), 178–208 (DIAVMNSMLNLYCKCDHVGDAKDLFDQMEQR), 209–243 (DMVSWNTMISGYASVGNMSEILKLLYRMRGDGLRP), 244–278 (DQQTFGASLSVSGTMCDLEMGRMLHCQIVKTGFDV), 279–309 (DMHLKTALITMYLKCGKEEASYRVLETIPNK), 310–344 (DVVCWTVMISGLMRLGRAEKALIVFSEMLQSGSDL), 345–379 (SSEAIASVVASCAQLGSFDLGASVHGYVLRHGYTL), 380–414 (DTPALNSLITMYAKCGHLDKSLVIFERMNERDLVS), 415–445 (WNAIISGYAQNVDLCKALLLFEEMKFKTVQQ), 447–481 (DSFTVVSLLQACSSAGALPVGKLIHCIVIRSFIRP), 482–512 (CSLVDTALVDMYSKCGYLEAAQRCFDSISWK), 513–547 (DVVSWGILIAGYGFHGKGDIALEIYSEFLHSGMEP), 548–583 (NHVIFLAVLSSCSHNGMVQQGLKIFSSMVRDFGVEP), and 584–618 (NHEHLACVVDLLCRAKRIEDAFKFYKENFTRPSID). The segment at 619–694 (VLGIILDACR…LPGWSKIEMN (76 aa)) is type E motif. The tract at residues 695–723 (GKTTTFFMNHTSHSDDTVSLLKLLSREMM) is type E(+) motif.

Belongs to the PPR family. PCMP-E subfamily.

This is Pentatricopeptide repeat-containing protein At4g04370 (PCMP-E99) from Arabidopsis thaliana (Mouse-ear cress).